The chain runs to 320 residues: ATP-dependent 6-phosphofructokinase (320 aa).

An ATP-binding site is contributed by G12. ADP-binding positions include 22 to 26 (RGVVR) and 55 to 60 (RYSVSD). ATP contacts are provided by residues 73–74 (RF) and 103–106 (GDGS). D104 contributes to the Mg(2+) binding site. Residue 126-128 (TID) coordinates substrate. Catalysis depends on D128, which acts as the Proton acceptor. R155 lines the ADP pocket. Residues R163 and 170–172 (MGR) contribute to the substrate site. Residues 186-188 (GCE), K212, and 214-216 (KKH) contribute to the ADP site. Substrate is bound by residues E223, R244, and 250–253 (HIQR).

The protein belongs to the phosphofructokinase type A (PFKA) family. ATP-dependent PFK group I subfamily. Prokaryotic clade 'B1' sub-subfamily. As to quaternary structure, homotetramer. The cofactor is Mg(2+).

Its subcellular location is the cytoplasm. It catalyses the reaction beta-D-fructose 6-phosphate + ATP = beta-D-fructose 1,6-bisphosphate + ADP + H(+). It functions in the pathway carbohydrate degradation; glycolysis; D-glyceraldehyde 3-phosphate and glycerone phosphate from D-glucose: step 3/4. Allosterically activated by ADP and other diphosphonucleosides, and allosterically inhibited by phosphoenolpyruvate. Catalyzes the phosphorylation of D-fructose 6-phosphate to fructose 1,6-bisphosphate by ATP, the first committing step of glycolysis. The chain is ATP-dependent 6-phosphofructokinase from Klebsiella pneumoniae (strain 342).